Reading from the N-terminus, the 143-residue chain is AP-2 complex subunit sigma (143 aa).

The protein belongs to the adaptor complexes small subunit family. Adaptor protein complex 2 (AP-2) is a heterotetramer composed of two large adaptins (alpha-type subunit apl3 and beta-type subunit apl1), a medium chain (mu-type subunit apm4) and a small adaptin (sigma-type subunit aps2).

Its subcellular location is the cell membrane. It localises to the membrane. It is found in the coated pit. Functionally, component of the adaptor complexes which link clathrin to receptors in coated vesicles. Clathrin-associated protein complexes are believed to interact with the cytoplasmic tails of membrane proteins, leading to their selection and concentration. In Schizosaccharomyces pombe (strain 972 / ATCC 24843) (Fission yeast), this protein is AP-2 complex subunit sigma (aps2).